The primary structure comprises 247 residues: tRNA (guanine-N(1)-)-methyltransferase (247 aa).

S-adenosyl-L-methionine contacts are provided by residues glycine 113 and 133 to 138; that span reads IGDFVM.

The protein belongs to the RNA methyltransferase TrmD family. In terms of assembly, homodimer.

The protein resides in the cytoplasm. It catalyses the reaction guanosine(37) in tRNA + S-adenosyl-L-methionine = N(1)-methylguanosine(37) in tRNA + S-adenosyl-L-homocysteine + H(+). Functionally, specifically methylates guanosine-37 in various tRNAs. This Vibrio cholerae serotype O1 (strain ATCC 39541 / Classical Ogawa 395 / O395) protein is tRNA (guanine-N(1)-)-methyltransferase.